The primary structure comprises 292 residues: Elongation factor Ts (292 aa).

The segment at 80-83 (TDFV) is involved in Mg(2+) ion dislocation from EF-Tu.

This sequence belongs to the EF-Ts family.

The protein localises to the cytoplasm. Functionally, associates with the EF-Tu.GDP complex and induces the exchange of GDP to GTP. It remains bound to the aminoacyl-tRNA.EF-Tu.GTP complex up to the GTP hydrolysis stage on the ribosome. This chain is Elongation factor Ts, found in Oenococcus oeni (strain ATCC BAA-331 / PSU-1).